Here is a 262-residue protein sequence, read N- to C-terminus: Acyl-[acyl-carrier-protein]--UDP-N-acetylglucosamine O-acyltransferase (262 aa).

The protein belongs to the transferase hexapeptide repeat family. LpxA subfamily. Homotrimer.

Its subcellular location is the cytoplasm. It catalyses the reaction a (3R)-hydroxyacyl-[ACP] + UDP-N-acetyl-alpha-D-glucosamine = a UDP-3-O-[(3R)-3-hydroxyacyl]-N-acetyl-alpha-D-glucosamine + holo-[ACP]. It functions in the pathway glycolipid biosynthesis; lipid IV(A) biosynthesis; lipid IV(A) from (3R)-3-hydroxytetradecanoyl-[acyl-carrier-protein] and UDP-N-acetyl-alpha-D-glucosamine: step 1/6. In terms of biological role, involved in the biosynthesis of lipid A, a phosphorylated glycolipid that anchors the lipopolysaccharide to the outer membrane of the cell. In Shigella dysenteriae serotype 1 (strain Sd197), this protein is Acyl-[acyl-carrier-protein]--UDP-N-acetylglucosamine O-acyltransferase.